The chain runs to 523 residues: NEDD8-activating enzyme E1 regulatory subunit AXL (523 aa).

It belongs to the ubiquitin-activating E1 family. ULA1 subfamily. As to quaternary structure, heterodimer of ECR1 and AXL1. The complex binds to RUB1/NEDD8 and RCE1.

Its subcellular location is the nucleus. The protein operates within protein modification; protein neddylation. Regulatory subunit of the dimeric ECR1-AXL1 E1 enzyme. E1 activates RUB1/NEDD8 by first adenylating its C-terminal glycine residue with ATP, thereafter linking this residue to the side chain of the catalytic cysteine, yielding a RUB1-ECR1 thioester and free AMP. E1 finally transfers RUB1 to the catalytic cysteine of RCE1. May function redundantly with AXR1 in the RUB conjugating pathway. Seems not to be functionally equivalent to AXR1 in vivo. This Arabidopsis thaliana (Mouse-ear cress) protein is NEDD8-activating enzyme E1 regulatory subunit AXL.